Consider the following 209-residue polypeptide: Uracil phosphoribosyltransferase (209 aa).

5-phospho-alpha-D-ribose 1-diphosphate contacts are provided by residues Arg-79, Arg-104, and 131–139; that span reads DPMLATGGS. Residues Ile-194 and 199–201 contribute to the uracil site; that span reads GDA. Residue Asp-200 coordinates 5-phospho-alpha-D-ribose 1-diphosphate.

This sequence belongs to the UPRTase family. Mg(2+) is required as a cofactor.

It catalyses the reaction UMP + diphosphate = 5-phospho-alpha-D-ribose 1-diphosphate + uracil. The protein operates within pyrimidine metabolism; UMP biosynthesis via salvage pathway; UMP from uracil: step 1/1. With respect to regulation, allosterically activated by GTP. Catalyzes the conversion of uracil and 5-phospho-alpha-D-ribose 1-diphosphate (PRPP) to UMP and diphosphate. The polypeptide is Uracil phosphoribosyltransferase (Clostridium acetobutylicum (strain ATCC 824 / DSM 792 / JCM 1419 / IAM 19013 / LMG 5710 / NBRC 13948 / NRRL B-527 / VKM B-1787 / 2291 / W)).